A 147-amino-acid chain; its full sequence is Hemoglobin subunit epsilon (147 aa).

In terms of domain architecture, Globin spans 3 to 147 (HFTAEEKAAI…VAIALGHKYH (145 aa)). Residues serine 14 and serine 51 each carry the phosphoserine modification. The heme b site is built by histidine 64 and histidine 93.

It belongs to the globin family. Heterotetramer of two alpha chains and two epsilon chains in early embryonic hemoglobin Gower-2; two zeta chains and two epsilon chains in early embryonic hemoglobin Gower-1. Red blood cells.

Its function is as follows. The epsilon chain is a beta-type chain of early mammalian embryonic hemoglobin. The polypeptide is Hemoglobin subunit epsilon (HBE1) (Pithecia irrorata (Gray monk saki)).